A 612-amino-acid polypeptide reads, in one-letter code: Sulfite reductase [NADPH] flavoprotein alpha-component (612 aa).

A Flavodoxin-like domain is found at 64-202 (VTLISASQTG…QAQQWRQQVV (139 aa)). FMN is bound by residues 70-75 (SQTGNA), 117-120 (STQG), and 153-162 (LGDTSYEHFC). One can recognise an FAD-binding FR-type domain in the interval 247 to 461 (TAPLTAQLSV…IEHNDNFRLP (215 aa)). FAD is bound by residues Thr335, Lys369, 399–402 (RLYS), 417–419 (TVG), Tyr423, and 432–435 (GGAS). Residues 532 to 533 (SR), 538 to 542 (KIYVQ), and Asp574 each bind NADP(+). Tyr612 contributes to the FAD binding site.

This sequence belongs to the NADPH-dependent sulphite reductase flavoprotein subunit CysJ family. In the N-terminal section; belongs to the flavodoxin family. The protein in the C-terminal section; belongs to the flavoprotein pyridine nucleotide cytochrome reductase family. Alpha(8)-beta(8). The alpha component is a flavoprotein, the beta component is a hemoprotein. FAD is required as a cofactor. The cofactor is FMN.

The catalysed reaction is hydrogen sulfide + 3 NADP(+) + 3 H2O = sulfite + 3 NADPH + 4 H(+). It participates in sulfur metabolism; hydrogen sulfide biosynthesis; hydrogen sulfide from sulfite (NADPH route): step 1/1. Component of the sulfite reductase complex that catalyzes the 6-electron reduction of sulfite to sulfide. This is one of several activities required for the biosynthesis of L-cysteine from sulfate. The flavoprotein component catalyzes the electron flow from NADPH -&gt; FAD -&gt; FMN to the hemoprotein component. The sequence is that of Sulfite reductase [NADPH] flavoprotein alpha-component from Yersinia pestis bv. Antiqua (strain Nepal516).